The following is a 154-amino-acid chain: Secreted RxLR effector protein PITG_21681 (154 aa).

A signal peptide spans 1 to 20 (MRRYAALMVIDAVLLSTSQA). The interval 42–70 (SAERDGGIPNKRSLRRISVTESNDGERDE) is disordered. The RxLR-dEER signature appears at 53–72 (RSLRRISVTESNDGERDEER).

The protein belongs to the RxLR effector family.

The protein resides in the secreted. The protein localises to the host cell. Functionally, secreted effector that is involved in host plant infection. Increases the susceptibility to P.infestans and reduces the plant growth. Affects the expression of host genes. This Phytophthora infestans (strain T30-4) (Potato late blight agent) protein is Secreted RxLR effector protein PITG_21681.